The sequence spans 158 residues: MRTVVYPGTFDPITNGHVDLIHRAARLFDRVVVAVAADTGKTPVFSTEERVELVRGSVAGDPNVEILPFEGLLVNFARTLGVSVIMRGLRAVSDFEYEFQLAGMNRRMAPDIETLFLTPAEQYAYISSSLVREIARLRGDVSTFVTPTVQAALRARFG.

Substrate is bound at residue Thr-9. ATP contacts are provided by residues 9–10 and His-17; that span reads TF. Substrate-binding residues include Lys-41, Leu-73, and Arg-87. ATP contacts are provided by residues 88-90, Glu-98, and 123-129; these read GLR and YAYISSS.

This sequence belongs to the bacterial CoaD family. Homohexamer. It depends on Mg(2+) as a cofactor.

It localises to the cytoplasm. The enzyme catalyses (R)-4'-phosphopantetheine + ATP + H(+) = 3'-dephospho-CoA + diphosphate. It participates in cofactor biosynthesis; coenzyme A biosynthesis; CoA from (R)-pantothenate: step 4/5. Reversibly transfers an adenylyl group from ATP to 4'-phosphopantetheine, yielding dephospho-CoA (dPCoA) and pyrophosphate. This chain is Phosphopantetheine adenylyltransferase, found in Allochromatium vinosum (strain ATCC 17899 / DSM 180 / NBRC 103801 / NCIMB 10441 / D) (Chromatium vinosum).